Here is a 461-residue protein sequence, read N- to C-terminus: ATP synthase subunit beta (461 aa).

Residue 151 to 158 coordinates ATP; sequence GGAGVGKT.

Belongs to the ATPase alpha/beta chains family. As to quaternary structure, F-type ATPases have 2 components, CF(1) - the catalytic core - and CF(0) - the membrane proton channel. CF(1) has five subunits: alpha(3), beta(3), gamma(1), delta(1), epsilon(1). CF(0) has three main subunits: a(1), b(2) and c(9-12). The alpha and beta chains form an alternating ring which encloses part of the gamma chain. CF(1) is attached to CF(0) by a central stalk formed by the gamma and epsilon chains, while a peripheral stalk is formed by the delta and b chains.

It is found in the cell inner membrane. The catalysed reaction is ATP + H2O + 4 H(+)(in) = ADP + phosphate + 5 H(+)(out). Its function is as follows. Produces ATP from ADP in the presence of a proton gradient across the membrane. The catalytic sites are hosted primarily by the beta subunits. In Colwellia psychrerythraea (strain 34H / ATCC BAA-681) (Vibrio psychroerythus), this protein is ATP synthase subunit beta.